Here is a 143-residue protein sequence, read N- to C-terminus: Transcriptional regulator SlyA (143 aa).

The 134-residue stretch at 2-135 (ESTLGSDLAR…LSGLIDKLEK (134 aa)) folds into the HTH marR-type domain. The H-T-H motif DNA-binding region spans 49–72 (QIQLAKAIGIEQPSLVRTLDQLEE).

This sequence belongs to the SlyA family. In terms of assembly, homodimer.

Functionally, transcription regulator that can specifically activate or repress expression of target genes. The sequence is that of Transcriptional regulator SlyA from Yersinia pestis bv. Antiqua (strain Antiqua).